A 620-amino-acid polypeptide reads, in one-letter code: Estrogen receptor (620 aa).

Polar residues-rich tracts occupy residues 1-10 and 101-111; these read MSKRQSSVQI and GSLQSLGSGPT. Disordered stretches follow at residues 1 to 55 and 88 to 111; these read MSKR…RGSG and YSAP…SGPT. The interval 1 to 185 is modulating; sequence MSKRQSSVQI…GFEMAKDTRF (185 aa). 2 NR C4-type zinc fingers span residues 186–206 and 222–246; these read CAVC…CEGC and CPAT…LRKC. The nuclear receptor DNA-binding region spans 186 to 251; the sequence is CAVCSDYASG…RLRKCYEVGM (66 aa). The segment at 252 to 314 is hinge; the sequence is MKGGVRKDRI…GGGRLSVTSI (63 aa). Positions 286-308 are disordered; the sequence is KTVHYDGRKRSSTGGGGGGGGGR. The span at 298-308 shows a compositional bias: gly residues; the sequence is TGGGGGGGGGR. The region spanning 315 to 551 is the NR LBD domain; it reads PPEQVLLLLQ…DLLLEMLDAH (237 aa). The interval 558-620 is disordered; sequence RAPQSLSQVD…RPDCTPALQD (63 aa).

It belongs to the nuclear hormone receptor family. NR3 subfamily. As to quaternary structure, binds DNA as a homodimer. Can form a heterodimer with ER-beta. In terms of tissue distribution, widely expressed in brain, ovary, testis, and female liver.

The protein resides in the nucleus. The steroid hormones and their receptors are involved in the regulation of eukaryotic gene expression and affect cellular proliferation and differentiation in target tissues. The chain is Estrogen receptor (esr1) from Oryzias latipes (Japanese rice fish).